The primary structure comprises 374 residues: Dual-specificity RNA methyltransferase RlmN (374 aa).

The active-site Proton acceptor is the Glu91. The Radical SAM core domain maps to 97–340 (EDDRGTLCIS…TTVRKTRGDD (244 aa)). Cys104 and Cys345 are joined by a disulfide. Residues Cys111, Cys115, and Cys118 each coordinate [4Fe-4S] cluster. S-adenosyl-L-methionine-binding positions include 165–166 (GE), Ser197, 219–221 (SLH), and Asn302. The S-methylcysteine intermediate role is filled by Cys345.

It belongs to the radical SAM superfamily. RlmN family. It depends on [4Fe-4S] cluster as a cofactor.

Its subcellular location is the cytoplasm. The enzyme catalyses adenosine(2503) in 23S rRNA + 2 reduced [2Fe-2S]-[ferredoxin] + 2 S-adenosyl-L-methionine = 2-methyladenosine(2503) in 23S rRNA + 5'-deoxyadenosine + L-methionine + 2 oxidized [2Fe-2S]-[ferredoxin] + S-adenosyl-L-homocysteine. It catalyses the reaction adenosine(37) in tRNA + 2 reduced [2Fe-2S]-[ferredoxin] + 2 S-adenosyl-L-methionine = 2-methyladenosine(37) in tRNA + 5'-deoxyadenosine + L-methionine + 2 oxidized [2Fe-2S]-[ferredoxin] + S-adenosyl-L-homocysteine. Specifically methylates position 2 of adenine 2503 in 23S rRNA and position 2 of adenine 37 in tRNAs. m2A2503 modification seems to play a crucial role in the proofreading step occurring at the peptidyl transferase center and thus would serve to optimize ribosomal fidelity. This chain is Dual-specificity RNA methyltransferase RlmN, found in Acidovorax sp. (strain JS42).